The primary structure comprises 648 residues: Cell surface glycoprotein MUC18 (648 aa).

The first 23 residues, 1-23 (MGLPRLVCAFLFAACCCCRSATG), serve as a signal peptide directing secretion. 2 Ig-like V-type domains span residues 24 to 131 (VPGE…HYVQ) and 141 to 244 (PTIQ…KEVT). The Extracellular segment spans residues 24 to 560 (VPGEEKQPTP…EKKLPQQESK (537 aa)). 5 cysteine pairs are disulfide-bonded: Cys50–Cys118, Cys163–Cys225, Cys274–Cys322, Cys367–Cys409, and Cys454–Cys501. Asn58 carries an N-linked (GlcNAc...) asparagine glycan. 3 Ig-like C2-type domains span residues 246–332 (PVLY…TTVM), 337–426 (PLEL…RRVS), and 432–512 (SPWM…SNTT). Positions 282 to 304 (PHFTINKKNPSTEEMEEESTDEN) are disordered. A glycan (N-linked (GlcNAc...) asparagine) is linked at Asn510. Residues 527–549 (DSSQTTGLSTPTVSPHSRANSTS) are compositionally biased toward polar residues. The segment at 527-554 (DSSQTTGLSTPTVSPHSRANSTSTEKKL) is disordered. Residues 561–581 (GVVIVAVIVCTLVLAVLGATL) form a helical membrane-spanning segment. Residues 582 to 648 (YYFYKKGKLP…QGEKYIDLRH (67 aa)) are Cytoplasmic-facing. Phosphoserine occurs at positions 608 and 616. Residues 626–648 (LQGSNGDKRAPGDQGEKYIDLRH) are disordered. Positions 631 to 648 (GDKRAPGDQGEKYIDLRH) are enriched in basic and acidic residues.

As to expression, detected in lung, uterus and placenta (at protein level). Detected in heart, lung, kidney, adrenal gland, intestine, testis, skeletal muscle and aorta. Detected at low levels in adult brain, in particular in brain stem and spinal cord, but also in hippocampus, olfactory bulb and striatum (at protein level).

It localises to the cell membrane. It is found in the perikaryon. Functionally, plays a role in cell adhesion, and in cohesion of the endothelial monolayer at intercellular junctions in vascular tissue. Its expression may allow melanoma cells to interact with cellular elements of the vascular system, thereby enhancing hematogeneous tumor spread. Could be an adhesion molecule active in neural crest cells during embryonic development. Acts as a surface receptor that triggers tyrosine phosphorylation of FYN and PTK2/FAK1, and a transient increase in the intracellular calcium concentration. The polypeptide is Cell surface glycoprotein MUC18 (Mcam) (Rattus norvegicus (Rat)).